Consider the following 226-residue polypeptide: PKHD-type hydroxylase Sde_2812 (226 aa).

The 101-residue stretch at 78–178 (KIFPPLFNCY…RLASFFWLQS (101 aa)) folds into the Fe2OG dioxygenase domain. The Fe cation site is built by His-96, Asp-98, and His-159. Residue Arg-169 participates in 2-oxoglutarate binding.

It depends on Fe(2+) as a cofactor. Requires L-ascorbate as cofactor.

This is PKHD-type hydroxylase Sde_2812 from Saccharophagus degradans (strain 2-40 / ATCC 43961 / DSM 17024).